The following is an 828-amino-acid chain: Periplasmic nitrate reductase (828 aa).

The tat-type signal signal peptide spans 1 to 31 (MKLSRRSFMKANAVAAAAAAAGLSVPGVARA). A 4Fe-4S Mo/W bis-MGD-type domain is found at 39–95 (IKWDKAPCRFCGTGCGVLVGTQQGRVVACQGDPDAPVNRGLNCIKGYFLPKIMYGKD). Cys-46, Cys-49, Cys-53, and Cys-81 together coordinate [4Fe-4S] cluster. Mo-bis(molybdopterin guanine dinucleotide) contacts are provided by residues Lys-83, Gln-150, Asn-175, Cys-179, 212 to 219 (WGANMAEM), 243 to 247 (STYQH), 262 to 264 (QSD), Met-372, Gln-376, Asn-482, 508 to 509 (SD), Lys-531, Asp-558, and 718 to 727 (TGRVLEHWHT). Residue Phe-794 participates in substrate binding. 2 residues coordinate Mo-bis(molybdopterin guanine dinucleotide): Asn-802 and Lys-819.

This sequence belongs to the prokaryotic molybdopterin-containing oxidoreductase family. NasA/NapA/NarB subfamily. In terms of assembly, component of the periplasmic nitrate reductase NapAB complex composed of NapA and NapB. The cofactor is [4Fe-4S] cluster. Mo-bis(molybdopterin guanine dinucleotide) serves as cofactor. Post-translationally, predicted to be exported by the Tat system. The position of the signal peptide cleavage has not been experimentally proven.

It is found in the periplasm. It catalyses the reaction 2 Fe(II)-[cytochrome] + nitrate + 2 H(+) = 2 Fe(III)-[cytochrome] + nitrite + H2O. Its function is as follows. Catalytic subunit of the periplasmic nitrate reductase complex NapAB. Receives electrons from NapB and catalyzes the reduction of nitrate to nitrite. The chain is Periplasmic nitrate reductase from Escherichia coli O157:H7 (strain EC4115 / EHEC).